Here is a 167-residue protein sequence, read N- to C-terminus: Ribosome maturation factor RimM (167 aa).

A PRC barrel domain is found at 94-165 (EHEYYYSDII…TIKITPMEGL (72 aa)).

This sequence belongs to the RimM family. In terms of assembly, binds ribosomal protein uS19.

The protein resides in the cytoplasm. In terms of biological role, an accessory protein needed during the final step in the assembly of 30S ribosomal subunit, possibly for assembly of the head region. Essential for efficient processing of 16S rRNA. May be needed both before and after RbfA during the maturation of 16S rRNA. It has affinity for free ribosomal 30S subunits but not for 70S ribosomes. The polypeptide is Ribosome maturation factor RimM (Staphylococcus epidermidis (strain ATCC 35984 / DSM 28319 / BCRC 17069 / CCUG 31568 / BM 3577 / RP62A)).